The primary structure comprises 130 residues: Protein ApaG (130 aa).

One can recognise an ApaG domain in the interval 3 to 127 (RALTRDIEVT…FSLDTPDLRR (125 aa)).

The polypeptide is Protein ApaG (Allorhizobium ampelinum (strain ATCC BAA-846 / DSM 112012 / S4) (Agrobacterium vitis (strain S4))).